Here is a 242-residue protein sequence, read N- to C-terminus: Hairy and enhancer of split-related protein HELT (242 aa).

A bHLH domain is found at 10–65 (RTPVSHKVIEKRRRDRINRCLNELGKTVPMALAKQSSGKLEKAEILEMTVQYLRAL). Lys-48 carries the N6-acetyllysine modification. The Orange domain occupies 87–122 (FHYGYHECMKNLVHYLTTVERMETKDTKYARILAFL).

This sequence belongs to the HEY family. As to quaternary structure, self-associates. Interacts with HES5 and HEY2.

Its subcellular location is the nucleus. In terms of biological role, transcriptional repressor which binds preferentially to the canonical E box sequence 5'-CACGCG-3'. In Homo sapiens (Human), this protein is Hairy and enhancer of split-related protein HELT (HELT).